Reading from the N-terminus, the 550-residue chain is Mycosin-2 (550 aa).

Positions 1-33 (MASPLNRPGLRAAAASAALTLVALSANVPAAQA) are cleaved as a signal peptide. Residues 34–62 (IPPPSVDPAMVPADARPGPDQPMRRSNSC) are disordered. The Peptidase S8 domain occupies 79–490 (GFNLVNISKA…YGLVDPVAAL (412 aa)). Active-site charge relay system residues include aspartate 103 and histidine 133. Positions 168 to 190 (PPVTAAPAPPVEVPPPMPPPPPV) are enriched in pro residues. The interval 168 to 236 (PPVTAAPAPP…PPPPPGAPDG (69 aa)) is disordered. Serine 435 acts as the Charge relay system in catalysis. A helical transmembrane segment spans residues 524 to 544 (NIAIGFVGAVATGVLAMAIGA).

Belongs to the peptidase S8 family.

Its subcellular location is the cell membrane. The sequence is that of Mycosin-2 from Mycobacterium tuberculosis (strain ATCC 25618 / H37Rv).